The following is an 84-amino-acid chain: MPKPASSPTSFEAAVAELETIVQQMESGQLSLEDALARYQRGVGLLKFCQETLSGAEQRIRQLEGGELVELRIDTNADGSQECA.

Belongs to the XseB family. Heterooligomer composed of large and small subunits.

It localises to the cytoplasm. The enzyme catalyses Exonucleolytic cleavage in either 5'- to 3'- or 3'- to 5'-direction to yield nucleoside 5'-phosphates.. Functionally, bidirectionally degrades single-stranded DNA into large acid-insoluble oligonucleotides, which are then degraded further into small acid-soluble oligonucleotides. The polypeptide is Exodeoxyribonuclease 7 small subunit (Azoarcus sp. (strain BH72)).